The following is a 103-amino-acid chain: Large ribosomal subunit protein bL21 (103 aa).

This sequence belongs to the bacterial ribosomal protein bL21 family. In terms of assembly, part of the 50S ribosomal subunit. Contacts protein L20.

This protein binds to 23S rRNA in the presence of protein L20. The protein is Large ribosomal subunit protein bL21 of Shewanella sediminis (strain HAW-EB3).